Consider the following 317-residue polypeptide: MGVAGSGVLYFLFNNVPSPRFWLKKTQLIGTENPEGITGYECPYEYLRKSYGKHHWAAFVDKLSPNLQNEDPAKYRMVLETMDVIHLCLMMVDDISDGSEYRKGKPAAHKIYGAPETANRAYYRVTQILAQTATEFPRLSPWLMTDLRDILEGQDMSLVWRRDGVNGFPGTASERTAAYKRMVLLKTGGLFRLLGHLTLENNSMDEAFSTLGWHSQLQNDCKNVYSSEYAKMKGVVAEDLLNREMTYPIVLALDASGGHWVEAALKSPSRRNVGNALKIIQCDYVRDVCMAELARSGAPVKEWLKLWKREEKLDLKA.

2 residues coordinate substrate: Lys-53 and His-86. The Mg(2+) site is built by Asp-93 and Asp-97. 6 residues coordinate substrate: Arg-102, Lys-186, Thr-187, Gln-216, Asn-223, and Lys-233.

The protein belongs to the FPP/GGPP synthase family.

The protein operates within secondary metabolite biosynthesis. Its function is as follows. Prenyl transferase; part of the gene cluster that mediates the biosynthesis of paxalline, a mycotoxin that acts as an inhibitor of mammalian maxi-K channels. PaxG, the geranylgeranyl diphosphate (GGPP) synthase is proposed to catalyze the first step in paxilline biosynthesis. Condensation of indole-3-glycerol phosphate with GGPP by paxC then forms 3-geranylgeranylindole (3-GGI), followed by epoxidation and cyclization of this intermediate (by paxM and paxB) to form paspaline. Paspaline is subsequently converted to 13-desoxypaxilline by paxP, the latter being then converted to paxilline by paxQ. Finally paxilline can be mono- and di-prenylated by paxD. The sequence is that of Prenyl transferase paxC from Penicillium paxilli.